A 155-amino-acid polypeptide reads, in one-letter code: Protein FAM162A (155 aa).

Residues 77–103 (RFKKEEEIPETISFEMLDAAKNKIRVK) are required for proapoptotic activity. Residues 102 to 121 (VKVSYLMIALTVAGCVYMVI) traverse the membrane as a helical segment.

It belongs to the UPF0389 family. In terms of assembly, interacts with HSP90AB1; HSP90AB1 is essential for FAM162A mitochondrial localization and pro-apoptotic activity. Interacts with VDAC2; the interaction is probably involved in inducing mitochondrial permeability transition.

Its subcellular location is the mitochondrion membrane. In terms of biological role, proposed to be involved in regulation of apoptosis; the exact mechanism may differ between cell types/tissues. May be involved in hypoxia-induced cell death of transformed cells implicating cytochrome C release and caspase activation (such as CASP9) and inducing mitochondrial permeability transition. May be involved in hypoxia-induced cell death of neuronal cells probably by promoting release of AIFM1 from mitochondria to cytoplasm and its translocation to the nucleus; however, the involvement of caspases has been reported conflictingly. In Rattus norvegicus (Rat), this protein is Protein FAM162A (Fam162a).